A 230-amino-acid polypeptide reads, in one-letter code: Cytidylate kinase (230 aa).

10-18 (GFSSTGKST) lines the ATP pocket.

It belongs to the cytidylate kinase family. Type 1 subfamily.

It localises to the cytoplasm. It catalyses the reaction CMP + ATP = CDP + ADP. It carries out the reaction dCMP + ATP = dCDP + ADP. This chain is Cytidylate kinase, found in Flavobacterium johnsoniae (strain ATCC 17061 / DSM 2064 / JCM 8514 / BCRC 14874 / CCUG 350202 / NBRC 14942 / NCIMB 11054 / UW101) (Cytophaga johnsonae).